We begin with the raw amino-acid sequence, 260 residues long: Myb transcription factor 42 (260 aa).

2 consecutive HTH myb-type domains span residues 9–61 and 62–116; these read KAHT…INYL and RPDL…RRKL. DNA-binding regions (H-T-H motif) lie at residues 37–61 and 89–112; these read WRSL…INYL and WSLI…NTHI.

As to expression, mainly expressed in the aerial parts and, to a lower extent, in roots.

It localises to the nucleus. Transcription factor that negatively regulates the expression of caffeic acid O-methyl-transferase genes (COMTs) and of other genes involved in the biosynthesis of lignin, thus preventing lignification. This is Myb transcription factor 42 from Zea mays (Maize).